A 331-amino-acid polypeptide reads, in one-letter code: uncharacterized protein (331 aa).

43-50 (GANESGKS) lines the ATP pocket.

This is an uncharacterized protein from Methanocaldococcus jannaschii (strain ATCC 43067 / DSM 2661 / JAL-1 / JCM 10045 / NBRC 100440) (Methanococcus jannaschii).